A 463-amino-acid chain; its full sequence is FAD-dependent monooxygenase ausM (463 aa).

E40, G54, and R113 together coordinate FAD. Residue Y217 is part of the active site. D309 and A322 together coordinate FAD. The helical transmembrane segment at 443–463 threads the bilayer; that stretch reads VPWLVISLPVLASVLCYLMFA.

It belongs to the paxM FAD-dependent monooxygenase family. FAD serves as cofactor.

Its subcellular location is the membrane. The protein operates within secondary metabolite biosynthesis; terpenoid biosynthesis. In terms of biological role, FAD-dependent monooxygenase; part of the gene cluster that mediates the biosynthesis of calidodehydroaustin, a fungal meroterpenoid. The first step of the pathway is the synthesis of 3,5-dimethylorsellinic acid by the polyketide synthase ausA. 3,5-dimethylorsellinic acid is then prenylated by the polyprenyl transferase ausN. Further epoxidation by the FAD-dependent monooxygenase ausM and cyclization by the probable terpene cyclase ausL lead to the formation of protoaustinoid A. Protoaustinoid A is then oxidized to spiro-lactone preaustinoid A3 by the combined action of the FAD-binding monooxygenases ausB and ausC, and the dioxygenase ausE. Acid-catalyzed keto-rearrangement and ring contraction of the tetraketide portion of preaustinoid A3 by ausJ lead to the formation of preaustinoid A4. The aldo-keto reductase ausK, with the help of ausH, is involved in the next step by transforming preaustinoid A4 into isoaustinone which is in turn hydroxylated by the P450 monooxygenase ausI to form austinolide. The cytochrome P450 monooxygenase ausG modifies austinolide to austinol. Austinol is further acetylated to austin by the O-acetyltransferase ausP, which spontaneously changes to dehydroaustin. The cytochrome P450 monooxygenase ausR then converts dehydroaustin is into 7-dehydrodehydroaustin. The hydroxylation catalyzed by ausR permits the O-acetyltransferase ausQ to add an additional acetyl group to the molecule, leading to the formation of acetoxydehydroaustin. The short chain dehydrogenase ausT catalyzes the reduction of the double bond present between carbon atoms 1 and 2 to convert 7-dehydrodehydroaustin into 1,2-dihydro-7-hydroxydehydroaustin. AusQ catalyzes not only an acetylation reaction but also the addition of the PKS ausV diketide product to 1,2-dihydro-7-hydroxydehydroaustin, forming precalidodehydroaustin. Finally, the iron/alpha-ketoglutarate-dependent dioxygenase converts precalidodehydroaustin into calidodehydroaustin. This is FAD-dependent monooxygenase ausM from Aspergillus calidoustus.